The chain runs to 117 residues: Prefoldin subunit beta (117 aa).

Belongs to the prefoldin subunit beta family. Heterohexamer of two alpha and four beta subunits.

The protein resides in the cytoplasm. Molecular chaperone capable of stabilizing a range of proteins. Seems to fulfill an ATP-independent, HSP70-like function in archaeal de novo protein folding. The sequence is that of Prefoldin subunit beta from Methanosarcina mazei (strain ATCC BAA-159 / DSM 3647 / Goe1 / Go1 / JCM 11833 / OCM 88) (Methanosarcina frisia).